Here is a 107-residue protein sequence, read N- to C-terminus: Ribonuclease P protein component 4 (107 aa).

Zn(2+) contacts are provided by Cys66, Cys69, Cys92, and Cys95.

Belongs to the eukaryotic/archaeal RNase P protein component 4 family. In terms of assembly, consists of a catalytic RNA component and at least 4-5 protein subunits. Zn(2+) is required as a cofactor.

Its subcellular location is the cytoplasm. It carries out the reaction Endonucleolytic cleavage of RNA, removing 5'-extranucleotides from tRNA precursor.. Functionally, part of ribonuclease P, a protein complex that generates mature tRNA molecules by cleaving their 5'-ends. In Methanosarcina acetivorans (strain ATCC 35395 / DSM 2834 / JCM 12185 / C2A), this protein is Ribonuclease P protein component 4.